The sequence spans 214 residues: MAGEADGKAPLGSRYPPAALNERILSSMSQKHVAAHPWHDLEIGPGAPAVFNCVVEIPRGSKVKYELDKATGLIKVDRVLYSSVVYPHNYGFIPRTLCEDGDPMDVLVLMQEQVVPGCFLRARAIGLMPMIDQGEKDDKIIAVCADDPEYRHFRDIKEIPPHRLQEIRRFFEDYKKNENKEVAVNEFLPAEDAINAIKYSMDLYGAYIIESLRK.

The substrate site is built by Lys-64, Arg-78, and Tyr-90. Asp-100, Asp-105, and Asp-137 together coordinate Mg(2+). Tyr-174 serves as a coordination point for substrate.

It belongs to the PPase family. The cofactor is Mg(2+).

The protein resides in the cytoplasm. It catalyses the reaction diphosphate + H2O = 2 phosphate + H(+). The sequence is that of Soluble inorganic pyrophosphatase (IPP) from Oryza sativa subsp. indica (Rice).